A 146-amino-acid chain; its full sequence is Hemoglobin subunit beta (146 aa).

Val1 carries the post-translational modification N-acetylvaline. The region spanning 2–146 (HLTDGEKNAL…VANALAHKYH (145 aa)) is the Globin domain. Ser44 carries the phosphoserine modification. Lys59 is subject to N6-acetyllysine. His63 lines the heme b pocket. Lys82 bears the N6-acetyllysine mark. His92 is a heme b binding site. S-nitrosocysteine is present on Cys93. Lys144 carries the post-translational modification N6-acetyllysine.

This sequence belongs to the globin family. Heterotetramer of two alpha chains and two beta chains. In terms of tissue distribution, red blood cells.

Involved in oxygen transport from the lung to the various peripheral tissues. This Otospermophilus beecheyi (California ground squirrel) protein is Hemoglobin subunit beta.